Reading from the N-terminus, the 491-residue chain is 2,3-bisphosphoglycerate-independent phosphoglycerate mutase (491 aa).

Residues Asp11 and Ser61 each coordinate Mn(2+). Catalysis depends on Ser61, which acts as the Phosphoserine intermediate. Residues His118, 147 to 148 (RD), Arg177, Arg183, 248 to 251 (RSDR), and Lys320 contribute to the substrate site. Mn(2+) is bound by residues Asp386, His390, Asp427, His428, and His445.

Belongs to the BPG-independent phosphoglycerate mutase family. In terms of assembly, monomer. It depends on Mn(2+) as a cofactor.

The catalysed reaction is (2R)-2-phosphoglycerate = (2R)-3-phosphoglycerate. It participates in carbohydrate degradation; glycolysis; pyruvate from D-glyceraldehyde 3-phosphate: step 3/5. Catalyzes the interconversion of 2-phosphoglycerate and 3-phosphoglycerate. This chain is 2,3-bisphosphoglycerate-independent phosphoglycerate mutase, found in Sulfurimonas denitrificans (strain ATCC 33889 / DSM 1251) (Thiomicrospira denitrificans (strain ATCC 33889 / DSM 1251)).